A 340-amino-acid chain; its full sequence is Selenide, water dikinase (340 aa).

U17 is a catalytic residue. U17 is a non-standard amino acid (selenocysteine). Residues K20 and 45–47 (NNE) each bind ATP. D48 serves as a coordination point for Mg(2+). ATP-binding positions include D65, D88, and 136-138 (GHT). Mg(2+) is bound at residue D88. Residue D224 participates in Mg(2+) binding.

The protein belongs to the selenophosphate synthase 1 family. Class I subfamily. In terms of assembly, homodimer. Requires Mg(2+) as cofactor.

The catalysed reaction is hydrogenselenide + ATP + H2O = selenophosphate + AMP + phosphate + 2 H(+). Synthesizes selenophosphate from selenide and ATP. This is Selenide, water dikinase from Campylobacter jejuni (strain RM1221).